Here is a 296-residue protein sequence, read N- to C-terminus: Formamidopyrimidine-DNA glycosylase (296 aa).

P2 (schiff-base intermediate with DNA) is an active-site residue. The active-site Proton donor is E3. The active-site Proton donor; for beta-elimination activity is the K58. DNA contacts are provided by H106, R125, and K167. The FPG-type zinc finger occupies 258 to 294 (RVYDRVGLPCSRPGCAGAITRIVQANRSTFFCATCQP). Residue R284 is the Proton donor; for delta-elimination activity of the active site.

This sequence belongs to the FPG family. In terms of assembly, monomer. Zn(2+) serves as cofactor.

It carries out the reaction Hydrolysis of DNA containing ring-opened 7-methylguanine residues, releasing 2,6-diamino-4-hydroxy-5-(N-methyl)formamidopyrimidine.. It catalyses the reaction 2'-deoxyribonucleotide-(2'-deoxyribose 5'-phosphate)-2'-deoxyribonucleotide-DNA = a 3'-end 2'-deoxyribonucleotide-(2,3-dehydro-2,3-deoxyribose 5'-phosphate)-DNA + a 5'-end 5'-phospho-2'-deoxyribonucleoside-DNA + H(+). Functionally, involved in base excision repair of DNA damaged by oxidation or by mutagenic agents. Acts as a DNA glycosylase that recognizes and removes damaged bases. Has a preference for oxidized purines, such as 7,8-dihydro-8-oxoguanine (8-oxoG). Has AP (apurinic/apyrimidinic) lyase activity and introduces nicks in the DNA strand. Cleaves the DNA backbone by beta-delta elimination to generate a single-strand break at the site of the removed base with both 3'- and 5'-phosphates. The chain is Formamidopyrimidine-DNA glycosylase from Methylobacterium radiotolerans (strain ATCC 27329 / DSM 1819 / JCM 2831 / NBRC 15690 / NCIMB 10815 / 0-1).